A 296-amino-acid chain; its full sequence is Nucleotide-binding protein SAG0531 (296 aa).

Residue G13 to T20 participates in ATP binding. D63–S66 serves as a coordination point for GTP.

Belongs to the RapZ-like family.

In terms of biological role, displays ATPase and GTPase activities. The protein is Nucleotide-binding protein SAG0531 of Streptococcus agalactiae serotype V (strain ATCC BAA-611 / 2603 V/R).